The chain runs to 407 residues: Serine/threonine transporter SstT (407 aa).

9 helical membrane-spanning segments follow: residues 14–34, 48–68, 82–102, 141–161, 192–212, 218–238, 290–310, 316–336, and 363–383; these read GSLV…ATVS, FVGA…AASI, IVIL…LMSF, AVIT…GLAL, IGIF…AIAG, LVLL…IVFF, IPLG…ILTL, MGIQ…GVSA, and VAMQ…SAET.

The protein belongs to the dicarboxylate/amino acid:cation symporter (DAACS) (TC 2.A.23) family.

It localises to the cell inner membrane. It carries out the reaction L-serine(in) + Na(+)(in) = L-serine(out) + Na(+)(out). It catalyses the reaction L-threonine(in) + Na(+)(in) = L-threonine(out) + Na(+)(out). Its function is as follows. Involved in the import of serine and threonine into the cell, with the concomitant import of sodium (symport system). The sequence is that of Serine/threonine transporter SstT from Shewanella pealeana (strain ATCC 700345 / ANG-SQ1).